Consider the following 303-residue polypeptide: DnaJ homolog subfamily C member 17 (303 aa).

Positions 11–76 constitute a J domain; that stretch reads DLYALLGIEE…AARAAYDKVR (66 aa). Basic and acidic residues-rich tracts occupy residues 78–106 and 150–166; these read ARKQ…RERQ and IRQD…ENTE. 2 disordered regions span residues 78 to 124 and 150 to 170; these read ARKQ…TTTL and IRQD…GKGT. The RRM domain occupies 178 to 249; that stretch reads KCKKEDESQG…NPLKVSWLEG (72 aa). K264 carries the post-translational modification N6-methyllysine.

It is found in the cytoplasm. The protein localises to the nucleus. May negatively affect PAX8-induced thyroglobulin/TG transcription. The protein is DnaJ homolog subfamily C member 17 (Dnajc17) of Rattus norvegicus (Rat).